The following is a 298-amino-acid chain: UPF0696 protein C11orf68 homolog (298 aa).

The span at 1 to 10 shows a compositional bias: low complexity; it reads MAAAAAAVAG. Residues 1-66 are disordered; sequence MAAAAAAVAG…EDSPGGREDG (66 aa). Gly residues predominate over residues 11-25; the sequence is AGRGGGGGGGGGGAA. A compositionally biased stretch (basic and acidic residues) spans 41 to 50; the sequence is ERSEGRRMEP.

It belongs to the UPF0696 family.

This is UPF0696 protein C11orf68 homolog (Bles03) from Mus musculus (Mouse).